Reading from the N-terminus, the 899-residue chain is MLKPQLQQSSQSTKALIPSWNTNPLFLASFPINILNKNFRLKKKNNFRVHHNYNGASTTKAVLSSTEKATGVKAVVTVQKQVNLNLSRGLDDIGDLLGKSLLLWIVAAELDHKTGIEKPGIRAYAHRGRDVDGDTHYEADFVIPQDFGEVGAILIENEHHKEMYVKNIVIDGFVHGKVEITCNSWVHSKFDNPDKRIFFTNKSYLPSQTPSGVSRLREEELVTLRGDGIGERKVFERIYDYDVYNDLGEADSNNDDAKRPVLGGKELPYPRRCKTGRPRSKKDPLSETRSTFVYVPRDEAFSEVKSVAFSGNTVYSVLHAVVPALESVVTDPNLGFPHFPAIDSLFNVGVDLPGLGDKKSGLFNVVPRLIKAISDTRKDVLLFESPQLVQRDKFSWFRDVEFARQTLAGLNPYSIRLVTEWPLRSKLDPKVYGPPESEITKELIEKEIGNYMTVEQAVQQKKLFILDYHDLLLPYVNKVNELKGSMLYGSRTIFFLTPQGTLKPLAIELTRPPVDDKPQWKEVYSPNDWNATGAWLWKLAKAHVLSHDSGYHQLVSHWLRTHCCTEPYIIASNRQLSAMHPIYRLLHPHFRYTMEINALAREALINANGVIESSFFPGKYAIELSSIAYGAEWRFDQEALPQNLISRGLAVEDPNEPHGLKLAIEDYPFANDGLVLWDILKQWVTNYVNHYYPQTNLIESDKELQAWWSEIKNVGHGDKRDEPWWPELKTPNDLIGIITTIVWVTSGHHAAVNFGQYSYAGYFPNRPTVARSKMPTEDPTAEEWEWFMNKPEEALLRCFPSQIQATKVMAILDVLSNHSPDEEYIGEKIEPYWAEDPVINAAFEVFSGKLKELEGIIDARNNDSKLSNRNGAGVMPYELLKPYSEPGVTGKGVPYSISI.

A chloroplast-targeting transit peptide spans 1–40 (MLKPQLQQSSQSTKALIPSWNTNPLFLASFPINILNKNFR). A PLAT domain is found at 78–200 (VQKQVNLNLS…DNPDKRIFFT (123 aa)). The 697-residue stretch at 203-899 (SYLPSQTPSG…GKGVPYSISI (697 aa)) folds into the Lipoxygenase domain. Positions 252-287 (SNNDDAKRPVLGGKELPYPRRCKTGRPRSKKDPLSE) are disordered. Over residues 271-280 (RRCKTGRPRS) the composition is skewed to basic residues. Histidine 557, histidine 562, histidine 749, asparagine 753, and isoleucine 899 together coordinate Fe cation.

It belongs to the lipoxygenase family. Monomer. Requires Fe cation as cofactor. Expressed in leaves and floral buds.

It localises to the plastid. The protein localises to the chloroplast stroma. The protein resides in the chloroplast thylakoid. It catalyses the reaction (9Z,12Z)-octadecadienoate + O2 = (13S)-hydroperoxy-(9Z,11E)-octadecadienoate. It carries out the reaction (9Z,12Z,15Z)-octadecatrienoate + O2 = (13S)-hydroperoxy-(9Z,11E,15Z)-octadecatrienoate. It participates in lipid metabolism; oxylipin biosynthesis. Functionally, plant lipoxygenase involved in a number of diverse aspects of plant physiology including growth and development, pest resistance, and senescence. May not be involved in the bulk production of jasmonate upon wounding. Catalyzes the hydroperoxidation of lipids containing a cis,cis-1,4-pentadiene structure. Linolenic acid is the preferred substrate, before linoleic and arachidonic acids. Also has some activity with phosphatidylglycerol, but not with galactolipids. The sequence is that of Linoleate 13S-lipoxygenase 2-1, chloroplastic from Solanum tuberosum (Potato).